The chain runs to 168 residues: MSQNTKHHRVTNYRRRDLRNTLESRLGLPVEKRRLVPQLFRLKITNIGLDVSDYTILDIIKEFGEPEYINFRDHKDSRSCISDFKDNEIATKLIEKYNNFEINGKSIQVTLLDQQKRKRDADQERRKLRHGPRGGYGSHYTKSQKPIEQRNKTVDELNAELDAYMKES.

Residues 40 to 114 (FRLKITNIGL…KSIQVTLLDQ (75 aa)) form the RRM domain. A disordered region spans residues 113 to 152 (DQQKRKRDADQERRKLRHGPRGGYGSHYTKSQKPIEQRNK).

The protein belongs to the YRA1 family. Associates with mRNPs.

The protein localises to the nucleus. Its function is as follows. Involved in export of poly(A) mRNAs from the nucleus. Recruited to the coding sequences as well as poly-A sites of active genes. In Candida glabrata (strain ATCC 2001 / BCRC 20586 / JCM 3761 / NBRC 0622 / NRRL Y-65 / CBS 138) (Yeast), this protein is RNA annealing protein YRA2 (YRA2).